A 412-amino-acid polypeptide reads, in one-letter code: Class E basic helix-loop-helix protein 40 (412 aa).

Positions 1–21 (MERIPSAQPPPTCLPKAPGLE) are disordered. The segment at 1 to 139 (MERIPSAQPP…LSGRNVEAGQ (139 aa)) is essential for interaction with BMAL1, E-box binding and repressor activity against the CLOCK-BMAL1 heterodimer. A bHLH domain is found at 52 to 107 (TYKLPHRLIEKKRRDRINECIAQLKDLLPEHLKLTTLGHLEKAVVLELTLKHVKAL). The tract at residues 75-79 (LKDLL) is necessary for interaction with RXRA and repressor activity against RXRA. Residues 142–175 (FCSGFQTCAREVLQYLAKHENTRDLKSSQLVTHL) form the Orange domain. A Glycyl lysine isopeptide (Lys-Gly) (interchain with G-Cter in SUMO1, SUMO2 and SUMO3) cross-link involves residue Lys159. A Glycyl lysine isopeptide (Lys-Gly) (interchain with G-Cter in SUMO2) cross-link involves residue Lys167. Disordered stretches follow at residues 182-256 (LLQG…ELRV) and 279-298 (KQES…SDDE). At Ser235 the chain carries Phosphoserine. Lys279 participates in a covalent cross-link: Glycyl lysine isopeptide (Lys-Gly) (interchain with G-Cter in SUMO1); alternate. Lys279 is covalently cross-linked (Glycyl lysine isopeptide (Lys-Gly) (interchain with G-Cter in SUMO1, SUMO2 and SUMO3); alternate). Lys279 participates in a covalent cross-link: Glycyl lysine isopeptide (Lys-Gly) (interchain with G-Cter in SUMO2); alternate. A Glycyl lysine isopeptide (Lys-Gly) (interchain with G-Cter in SUMO2) cross-link involves residue Lys288. Ser383 carries the post-translational modification Phosphoserine.

Homodimer. Heterodimer with BHLHE41/DEC2. Interacts with TCF3/E47. Interacts with ubiquitin-conjugating enzyme UBE2I/UBC9. Interacts with HDAC1, SUMO1, RXRA and BMAL1. Post-translationally, ubiquitinated; which may lead to proteasomal degradation. In terms of processing, sumoylation inhibits its ubiquitination and promotes its negative regulation of the CLOCK-BMAL1 heterodimer transcriptional activator activity.

It localises to the cytoplasm. Its subcellular location is the nucleus. Transcriptional repressor involved in the regulation of the circadian rhythm by negatively regulating the activity of the clock genes and clock-controlled genes. Acts as the negative limb of a novel autoregulatory feedback loop (DEC loop) which differs from the one formed by the PER and CRY transcriptional repressors (PER/CRY loop). Both these loops are interlocked as it represses the expression of PER1/2 and in turn is repressed by PER1/2 and CRY1/2. Represses the activity of the circadian transcriptional activator: CLOCK-BMAL1|BMAL2 heterodimer by competing for the binding to E-box elements (5'-CACGTG-3') found within the promoters of its target genes. Negatively regulates its own expression and the expression of DBP and BHLHE41/DEC2. Acts as a corepressor of RXR and the RXR-LXR heterodimers and represses the ligand-induced RXRA and NR1H3/LXRA transactivation activity. May be involved in the regulation of chondrocyte differentiation via the cAMP pathway. Represses the transcription of NR0B2 and attentuates the transactivation of NR0B2 by the CLOCK-BMAL1 complex. Drives the circadian rhythm of blood pressure through transcriptional repression of ATP1B1 in the cardiovascular system. The protein is Class E basic helix-loop-helix protein 40 (BHLHE40) of Bos taurus (Bovine).